The primary structure comprises 72 residues: UPF0154 protein EF_1734 (72 aa).

The helical transmembrane segment at 4–26 (GWVVLIAVIALLVGAAGGFFLAR) threads the bilayer.

This sequence belongs to the UPF0154 family.

It is found in the membrane. The protein is UPF0154 protein EF_1734 of Enterococcus faecalis (strain ATCC 700802 / V583).